The chain runs to 1228 residues: MSILSENNPTQTSITDPNESSHLHNPELNSGTRVASGPGPGPEVESTPLAPPTEVMNTTSANTSSLSLGSPMHEKIKQFDQDEVDTGETNDRTIESGSSDIDDSQQSHNNNNNNNNNESNPESSEADDEKTQGMPPRMPGTFNVKGLHQGDDSDNEKQYTELTKSINKRTSKDSYSPGTLESPGTLNALETNNVSPAVIEEEQHTSSLEDLSLSLQHQNENARLSAPRSAPPQVSTSKTSSFHDMSSVISSSTSVHKIPSNPTSTRGSHLSSYKSTLDPGKPAQAAAPPPPEIDIDNLLTKSELDSETDTLSSATNSPNLLRNDTLQGIPTRDDENIDDSPRQLSQNTSATSRNTSGTSTSTVVKNSRSGTSKLTSTSTAHNQTAAITPIIPSHNKFHQQVINTNSTNSSSSLEPLGVGINSNSSPKNGKKRKSGSKVRGVFSSMFGKNKSTSSSSSSNSGSNSHSQEVNIKISTPFNAKHLAHVGIDDNGSYTGLPIEWERLLSASGITKKEQQQHPQAVMDIVAFYQDTSENPDDAAFKKFHFDNNKSSSSGWSNENTPPATPGGSNSGSGGGGGGAPSSPHRTPPSSIIEKNNVEQKVITPSQSMPTKTESKQSENQHPHEDNATQYTPRTPTSHVQEGQFIPSRPAPKPPSTPLSSMSVSHKTPSSQSLPRSDSQSDIRSSTPKSHQDISPSKIKIRSISSKSLKSMRSRKSGDKFTHIAPAPPPPSLPSIPKSKSHSASLSSQLRPATNGSTTAPIPASAAFGGENNALPRQRINEFKAHRAPPPPPSASPAPPVPPAPPANLLSEQTSEIPQQRTAPSQALADVTAPTNIYEIQQTKYQEAQQKLREKKARELEEIQRLREKNERQNRQQETGQNNADTASGGSNIAPPVPVPNKKPPSGSGGGRDAKQAALIAQKKREEKKRKNLQIIAKLKTICNPGDPNELYVDLVKIGQGASGGVFLAHDVRDKSNIVAIKQMNLEQQPKKELIINEILVMKGSSHPNIVNFIDSYLLKGDLWVIMEYMEGGSLTDIVTHSVMTEGQIGVVCRETLKGLKFLHSKGVIHRDIKSDNILLNMDGNIKITDFGFCAQINEINSKRITMVGTPYWMAPEIVSRKEYGPKVDVWSLGIMIIEMLEGEPPYLNETPLRALYLIATNGTPKLKDPESLSYDIRKFLAWCLQVDFNKRADADELLHDNFITECDDVSSLSPLVKIARLKKMSESD.

Residues 1-18 are compositionally biased toward polar residues; sequence MSILSENNPTQTSITDPN. Disordered regions lie at residues 1 to 382 and 405 to 468; these read MSIL…TAHN and NSTN…HSQE. Low complexity-rich tracts occupy residues 57 to 70 and 95 to 123; these read NTTS…SLGS and ESGS…NPES. The span at 148-159 shows a compositional bias: basic and acidic residues; that stretch reads HQGDDSDNEKQY. 3 stretches are compositionally biased toward polar residues: residues 173 to 195, 205 to 222, and 232 to 244; these read DSYS…NNVS, TSSL…NENA, and PQVS…SFHD. Residues 246-255 show a composition bias toward low complexity; it reads SSVISSSTSV. 2 stretches are compositionally biased toward polar residues: residues 260–275 and 309–328; these read SNPT…SYKS and DTLS…TLQG. Low complexity predominate over residues 347 to 367; sequence NTSATSRNTSGTSTSTVVKNS. Residues 368 to 382 are compositionally biased toward polar residues; sequence RSGTSKLTSTSTAHN. Low complexity predominate over residues 437-466; sequence KVRGVFSSMFGKNKSTSSSSSSNSGSNSHS. A CRIB domain is found at 473 to 486; it reads ISTPFNAKHLAHVG. Disordered regions lie at residues 543–829 and 865–917; these read FHFD…ALAD and LREK…KQAA. Residues 548 to 559 are compositionally biased toward polar residues; the sequence is NKSSSSGWSNEN. Positions 568-579 are enriched in gly residues; that stretch reads SNSGSGGGGGGA. Residues 602-611 are compositionally biased toward polar residues; sequence ITPSQSMPTK. Positions 612–626 are enriched in basic and acidic residues; the sequence is TESKQSENQHPHEDN. The span at 627–640 shows a compositional bias: polar residues; sequence ATQYTPRTPTSHVQ. Low complexity-rich tracts occupy residues 668–681, 693–708, and 734–747; these read PSSQ…SQSD, ISPS…SKSL, and SIPK…SLSS. Residues 748–759 show a composition bias toward polar residues; it reads QLRPATNGSTTA. The span at 787-805 shows a compositional bias: pro residues; that stretch reads APPPPPSASPAPPVPPAPP. Over residues 809-824 the composition is skewed to polar residues; it reads LSEQTSEIPQQRTAPS. Basic and acidic residues predominate over residues 865-874; that stretch reads LREKNERQNR. The segment covering 875–890 has biased composition (polar residues); the sequence is QQETGQNNADTASGGS. The region spanning 951–1203 is the Protein kinase domain; sequence YVDLVKIGQG…ADELLHDNFI (253 aa). ATP contacts are provided by residues 957 to 965 and lysine 981; that span reads IGQGASGGV. Aspartate 1071 functions as the Proton acceptor in the catalytic mechanism.

This sequence belongs to the protein kinase superfamily. STE Ser/Thr protein kinase family. STE20 subfamily.

The protein resides in the cytoplasm. It is found in the nucleus. The catalysed reaction is L-seryl-[protein] + ATP = O-phospho-L-seryl-[protein] + ADP + H(+). It catalyses the reaction L-threonyl-[protein] + ATP = O-phospho-L-threonyl-[protein] + ADP + H(+). In terms of biological role, MAP4K component of the MAPK pathway required for the mating pheromone response, and the regulation of cell polarity and cell cycle. Phosphorylates histone H2B to form H2BS10ph. Required for hyphal formation and virulence. In Candida albicans (strain SC5314 / ATCC MYA-2876) (Yeast), this protein is Serine/threonine-protein kinase CST20 (CST20).